We begin with the raw amino-acid sequence, 1322 residues long: Chitin synthase chs-1 (1322 aa).

Residues M1–L39 lie on the Extracellular side of the membrane. Residues F40–I60 form a helical membrane-spanning segment. Residues M61 to S128 lie on the Cytoplasmic side of the membrane. A helical transmembrane segment spans residues V129–P149. The Extracellular portion of the chain corresponds to Q150–C156. A helical membrane pass occupies residues L157–V177. Over S178–C193 the chain is Cytoplasmic. A helical transmembrane segment spans residues F194–A214. Over L215 to T221 the chain is Extracellular. A helical transmembrane segment spans residues A222 to I242. At D243–K269 the chain is on the cytoplasmic side. A helical transmembrane segment spans residues L270–I290. Topologically, residues N291–R316 are extracellular. An N-linked (GlcNAc...) asparagine glycan is attached at N297. A helical transmembrane segment spans residues L317–F337. Residues L338 to D342 are Cytoplasmic-facing. The chain crosses the membrane as a helical span at residues L343 to V363. Residues R364–G396 lie on the Extracellular side of the membrane. A helical transmembrane segment spans residues I397–W417. Residues R418 to Q836 are Cytoplasmic-facing. Residues L455–V486 are a coiled coil. Residues F837–A857 traverse the membrane as a helical segment. The Extracellular segment spans residues Q858–R865. The helical transmembrane segment at G866–T886 threads the bilayer. Topologically, residues T887–Q892 are cytoplasmic. Residues L893 to A913 traverse the membrane as a helical segment. Over T914 to T922 the chain is Extracellular. A helical transmembrane segment spans residues V923–C943. Topologically, residues L944–N951 are cytoplasmic. Residues I952–Y972 traverse the membrane as a helical segment. At S973–R1148 the chain is on the extracellular side. The stretch at I1019–D1053 forms a coiled coil. A helical transmembrane segment spans residues N1149 to I1169. Over Q1170–P1209 the chain is Cytoplasmic. The helical transmembrane segment at L1210–L1230 threads the bilayer. At L1231–E1322 the chain is on the extracellular side.

The protein belongs to the chitin synthase family. Class IV subfamily.

It is found in the cell membrane. The enzyme catalyses [(1-&gt;4)-N-acetyl-beta-D-glucosaminyl](n) + UDP-N-acetyl-alpha-D-glucosamine = [(1-&gt;4)-N-acetyl-beta-D-glucosaminyl](n+1) + UDP + H(+). Functionally, essential for the embryonic synthesis of chitin, a component of the eggshell. The polypeptide is Chitin synthase chs-1 (Caenorhabditis elegans).